Here is a 509-residue protein sequence, read N- to C-terminus: Maturase K (509 aa).

This sequence belongs to the intron maturase 2 family. MatK subfamily.

The protein localises to the plastid. The protein resides in the chloroplast. Usually encoded in the trnK tRNA gene intron. Probably assists in splicing its own and other chloroplast group II introns. This Anthocercis viscosa (Sticky tailflower) protein is Maturase K.